The sequence spans 215 residues: MRRVLITGFEPFGGERINPSWEVVKQMNDLMMGGVRIVARQLPCAFGEALTALNTAIDDVQPVLVLAIGQAGGRADITIERVAINVDDARIPDNLGNQPVDQPIIQEGPAAYFTRLPIKAMVQGIREAGIPASVSQTAGTYVCNHVMYGLLHRLNQFNNEVKGGFIHIPYLPEQAVDHPGAPSMSAHSVLVALELAISIALQIEHDLHITGGAVH.

Catalysis depends on residues E80, C143, and H167.

This sequence belongs to the peptidase C15 family. As to quaternary structure, homotetramer.

Its subcellular location is the cytoplasm. The enzyme catalyses Release of an N-terminal pyroglutamyl group from a polypeptide, the second amino acid generally not being Pro.. In terms of biological role, removes 5-oxoproline from various penultimate amino acid residues except L-proline. This Yersinia pseudotuberculosis serotype O:3 (strain YPIII) protein is Pyrrolidone-carboxylate peptidase.